A 596-amino-acid chain; its full sequence is Aspartate--tRNA(Asp/Asn) ligase (596 aa).

Glu-182 lines the L-aspartate pocket. Residues 206–209 (QLFK) form an aspartate region. Residue Arg-228 coordinates L-aspartate. ATP contacts are provided by residues 228-230 (RDE) and Gln-237. L-aspartate is bound at residue His-456. Residue Glu-490 participates in ATP binding. Arg-497 provides a ligand contact to L-aspartate. 542–545 (GLDR) lines the ATP pocket.

The protein belongs to the class-II aminoacyl-tRNA synthetase family. Type 1 subfamily. In terms of assembly, homodimer.

It localises to the cytoplasm. It carries out the reaction tRNA(Asx) + L-aspartate + ATP = L-aspartyl-tRNA(Asx) + AMP + diphosphate. Functionally, aspartyl-tRNA synthetase with relaxed tRNA specificity since it is able to aspartylate not only its cognate tRNA(Asp) but also tRNA(Asn). Reaction proceeds in two steps: L-aspartate is first activated by ATP to form Asp-AMP and then transferred to the acceptor end of tRNA(Asp/Asn). This chain is Aspartate--tRNA(Asp/Asn) ligase, found in Syntrophotalea carbinolica (strain DSM 2380 / NBRC 103641 / GraBd1) (Pelobacter carbinolicus).